A 712-amino-acid chain; its full sequence is Follistatin-like domain-containing protein DDB_G0289517 (712 aa).

The signal sequence occupies residues 1-21 (MKIQTIIQIVLISFLFLNVES). Residue Asn102 is glycosylated (N-linked (GlcNAc...) asparagine). The tract at residues 181-400 (DIYNHLNPDS…SSSPVHQDPC (220 aa)) is disordered. The segment covering 192 to 203 (QFKDKPNHENHK) has biased composition (basic and acidic residues). Residues 204 to 214 (KDKNNKKHKKD) are compositionally biased toward basic residues. N-linked (GlcNAc...) asparagine glycans are attached at residues Asn217 and Asn234. The span at 220–251 (DKNNNNNNNNNNKKNKTINNNEPNQNQQSNPI) shows a compositional bias: low complexity. A compositionally biased stretch (polar residues) spans 254 to 269 (TFNNETPFPWNFKNQD). Low complexity predominate over residues 270–281 (QQQQKQEQTQKQ). Residues 301 to 321 (KEPTTHLNTIEPTSFTASASR) are compositionally biased toward polar residues. Acidic residues predominate over residues 330–339 (KDEENIDENN). Positions 352 to 364 (DDKSKKPKDDEKH) are enriched in basic and acidic residues. N-linked (GlcNAc...) asparagine glycosylation occurs at Asn369. Over residues 374–384 (PADDPSIEITE) the composition is skewed to acidic residues. Residues 386–395 (PTITPSSSPV) are compositionally biased toward polar residues. 2 consecutive Follistatin-like domains span residues 399–421 (PCKK…AYCK) and 471–494 (TCST…PYCQ). An N-linked (GlcNAc...) asparagine glycan is attached at Asn407. Residues Asn505, Asn524, and Asn566 are each glycosylated (N-linked (GlcNAc...) asparagine). Residues 596–618 (SCETLLCEGVNSYCVENGGPICK) enclose the Follistatin-like 3 domain. Asn622 is a glycosylation site (N-linked (GlcNAc...) asparagine). Follistatin-like domains lie at 660-682 (SCSV…PKCY) and 687-710 (ECSN…GACL).

The protein localises to the secreted. This chain is Follistatin-like domain-containing protein DDB_G0289517, found in Dictyostelium discoideum (Social amoeba).